Here is a 244-residue protein sequence, read N- to C-terminus: 14-3-3 protein beta/alpha (244 aa).

Position 1 is an N-acetylmethionine (Met1).

The protein belongs to the 14-3-3 family. Homodimer, and heterodimer with other family members.

The protein resides in the cytoplasm. Adapter protein implicated in the regulation of a large spectrum of both general and specialized signaling pathways. Binds to a large number of partners, usually by recognition of a phosphoserine or phosphothreonine motif. Binding generally results in the modulation of the activity of the binding partner. The sequence is that of 14-3-3 protein beta/alpha (ywhab) from Xenopus tropicalis (Western clawed frog).